Reading from the N-terminus, the 272-residue chain is Formamidopyrimidine-DNA glycosylase (272 aa).

Pro-2 (schiff-base intermediate with DNA) is an active-site residue. Glu-3 serves as the catalytic Proton donor. The active-site Proton donor; for beta-elimination activity is Lys-58. The DNA site is built by His-91, Arg-111, and Arg-153. The FPG-type zinc-finger motif lies at Ala-238–Ser-272. Arg-262 (proton donor; for delta-elimination activity) is an active-site residue.

The protein belongs to the FPG family. Monomer. Zn(2+) serves as cofactor.

It carries out the reaction Hydrolysis of DNA containing ring-opened 7-methylguanine residues, releasing 2,6-diamino-4-hydroxy-5-(N-methyl)formamidopyrimidine.. The catalysed reaction is 2'-deoxyribonucleotide-(2'-deoxyribose 5'-phosphate)-2'-deoxyribonucleotide-DNA = a 3'-end 2'-deoxyribonucleotide-(2,3-dehydro-2,3-deoxyribose 5'-phosphate)-DNA + a 5'-end 5'-phospho-2'-deoxyribonucleoside-DNA + H(+). In terms of biological role, involved in base excision repair of DNA damaged by oxidation or by mutagenic agents. Acts as a DNA glycosylase that recognizes and removes damaged bases. Has a preference for oxidized purines, such as 7,8-dihydro-8-oxoguanine (8-oxoG). Has AP (apurinic/apyrimidinic) lyase activity and introduces nicks in the DNA strand. Cleaves the DNA backbone by beta-delta elimination to generate a single-strand break at the site of the removed base with both 3'- and 5'-phosphates. The polypeptide is Formamidopyrimidine-DNA glycosylase (Marinomonas sp. (strain MWYL1)).